The primary structure comprises 95 residues: UPF0358 protein BcerKBAB4_3775 (95 aa).

Belongs to the UPF0358 family.

This is UPF0358 protein BcerKBAB4_3775 from Bacillus mycoides (strain KBAB4) (Bacillus weihenstephanensis).